The following is a 678-amino-acid chain: DNA gyrase subunit B (678 aa).

The 115-residue stretch at 456–570 folds into the Toprim domain; the sequence is SELYVVEGDS…HGYVFLAQPP (115 aa). Glutamate 462, aspartate 535, and aspartate 537 together coordinate Mg(2+).

It belongs to the type II topoisomerase GyrB family. In terms of assembly, heterotetramer, composed of two GyrA and two GyrB chains. In the heterotetramer, GyrA contains the active site tyrosine that forms a transient covalent intermediate with the DNA, while GyrB binds cofactors catalyzes ATP hydrolysis. The cofactor is Mg(2+). Mn(2+) serves as cofactor. Ca(2+) is required as a cofactor.

The protein localises to the cytoplasm. It carries out the reaction ATP-dependent breakage, passage and rejoining of double-stranded DNA.. Its activity is regulated as follows. DNA supercoiling is inhibited by fluoroquinolones; IC(50) 1 ug/ml for sitafloxacin. A type II topoisomerase that negatively supercoils closed circular double-stranded (ds) DNA in an ATP-dependent manner to modulate DNA topology and maintain chromosomes in an underwound state. Negative supercoiling favors strand separation, and DNA replication, transcription, recombination and repair, all of which involve strand separation. Also able to catalyze the interconversion of other topological isomers of dsDNA rings, including catenanes and knotted rings. Type II topoisomerases break and join 2 DNA strands simultaneously in an ATP-dependent manner. In Mycobacterium leprae (strain TN), this protein is DNA gyrase subunit B.